Here is an 831-residue protein sequence, read N- to C-terminus: Periplasmic nitrate reductase (831 aa).

Positions 1–35 (MTISDSRRTFLKASAAAATASAAGIPLANGTAAEA) form a signal peptide, tat-type signal. The 4Fe-4S Mo/W bis-MGD-type domain maps to 42-98 (IRWDKAACRFCGTGCSVLVGTKEGRVVATQGDPDAPVNRGLNCIKGYFLSKIMYGED). C49, C52, C56, and C84 together coordinate [4Fe-4S] cluster. Mo-bis(molybdopterin guanine dinucleotide) contacts are provided by residues K86, Q153, N178, C182, 215 to 222 (WGSNMAEM), 246 to 250 (STYEH), 265 to 267 (QTD), M375, Q379, N485, 511 to 512 (SD), K534, D561, and 721 to 730 (TGRVLEHWHS). W797 is a binding site for substrate. Residues N805 and K822 each coordinate Mo-bis(molybdopterin guanine dinucleotide).

This sequence belongs to the prokaryotic molybdopterin-containing oxidoreductase family. NasA/NapA/NarB subfamily. Component of the periplasmic nitrate reductase NapAB complex composed of NapA and NapB. Requires [4Fe-4S] cluster as cofactor. The cofactor is Mo-bis(molybdopterin guanine dinucleotide). Post-translationally, predicted to be exported by the Tat system. The position of the signal peptide cleavage has not been experimentally proven.

The protein localises to the periplasm. The enzyme catalyses 2 Fe(II)-[cytochrome] + nitrate + 2 H(+) = 2 Fe(III)-[cytochrome] + nitrite + H2O. In terms of biological role, catalytic subunit of the periplasmic nitrate reductase complex NapAB. Receives electrons from NapB and catalyzes the reduction of nitrate to nitrite. The protein is Periplasmic nitrate reductase of Dinoroseobacter shibae (strain DSM 16493 / NCIMB 14021 / DFL 12).